The sequence spans 331 residues: Phenylalanine--tRNA ligase alpha subunit (331 aa).

Glu-252 is a binding site for Mg(2+).

It belongs to the class-II aminoacyl-tRNA synthetase family. Phe-tRNA synthetase alpha subunit type 1 subfamily. As to quaternary structure, tetramer of two alpha and two beta subunits. It depends on Mg(2+) as a cofactor.

It is found in the cytoplasm. The catalysed reaction is tRNA(Phe) + L-phenylalanine + ATP = L-phenylalanyl-tRNA(Phe) + AMP + diphosphate + H(+). The protein is Phenylalanine--tRNA ligase alpha subunit of Marinomonas sp. (strain MWYL1).